The sequence spans 336 residues: Dihydroorotate dehydrogenase (quinone) (336 aa).

Residues 62-66 (AGLDK) and Thr-86 contribute to the FMN site. Lys-66 is a binding site for substrate. Substrate is bound at residue 111–115 (NRMGF). Residues Asn-139 and Asn-172 each coordinate FMN. Substrate is bound at residue Asn-172. Residue Ser-175 is the Nucleophile of the active site. Residue Asn-177 coordinates substrate. 2 residues coordinate FMN: Lys-217 and Thr-245. 246-247 (NT) serves as a coordination point for substrate. FMN contacts are provided by residues Gly-268, Gly-297, and 318–319 (YS).

Belongs to the dihydroorotate dehydrogenase family. Type 2 subfamily. Monomer. The cofactor is FMN.

The protein localises to the cell membrane. It carries out the reaction (S)-dihydroorotate + a quinone = orotate + a quinol. It participates in pyrimidine metabolism; UMP biosynthesis via de novo pathway; orotate from (S)-dihydroorotate (quinone route): step 1/1. Its function is as follows. Catalyzes the conversion of dihydroorotate to orotate with quinone as electron acceptor. The polypeptide is Dihydroorotate dehydrogenase (quinone) (Aliivibrio fischeri (strain ATCC 700601 / ES114) (Vibrio fischeri)).